The following is a 502-amino-acid chain: Lysine--tRNA ligase (502 aa).

Residues glutamate 410 and glutamate 417 each contribute to the Mg(2+) site.

The protein belongs to the class-II aminoacyl-tRNA synthetase family. Homodimer. The cofactor is Mg(2+).

Its subcellular location is the cytoplasm. The catalysed reaction is tRNA(Lys) + L-lysine + ATP = L-lysyl-tRNA(Lys) + AMP + diphosphate. In Photobacterium profundum (strain SS9), this protein is Lysine--tRNA ligase.